A 221-amino-acid polypeptide reads, in one-letter code: Deoxyribose-phosphate aldolase (221 aa).

D91 serves as the catalytic Proton donor/acceptor. K153 serves as the catalytic Schiff-base intermediate with acetaldehyde. The active-site Proton donor/acceptor is the K182.

It belongs to the DeoC/FbaB aldolase family. DeoC type 1 subfamily.

It localises to the cytoplasm. The enzyme catalyses 2-deoxy-D-ribose 5-phosphate = D-glyceraldehyde 3-phosphate + acetaldehyde. It participates in carbohydrate degradation; 2-deoxy-D-ribose 1-phosphate degradation; D-glyceraldehyde 3-phosphate and acetaldehyde from 2-deoxy-alpha-D-ribose 1-phosphate: step 2/2. Catalyzes a reversible aldol reaction between acetaldehyde and D-glyceraldehyde 3-phosphate to generate 2-deoxy-D-ribose 5-phosphate. The chain is Deoxyribose-phosphate aldolase from Clostridium botulinum (strain Eklund 17B / Type B).